We begin with the raw amino-acid sequence, 572 residues long: Urease subunit alpha (572 aa).

Residues 131-572 (GGIDAHIHFI…LPLAQRYFLF (442 aa)) form the Urease domain. Ni(2+) contacts are provided by His136, His138, and Lys219. At Lys219 the chain carries N6-carboxylysine. Residue His221 participates in substrate binding. Ni(2+) is bound by residues His248 and His274. His322 acts as the Proton donor in catalysis. Asp362 contributes to the Ni(2+) binding site.

Belongs to the metallo-dependent hydrolases superfamily. Urease alpha subunit family. As to quaternary structure, heterotrimer of UreA (gamma), UreB (beta) and UreC (alpha) subunits. Three heterotrimers associate to form the active enzyme. Requires Ni cation as cofactor. Carboxylation allows a single lysine to coordinate two nickel ions.

It is found in the cytoplasm. The enzyme catalyses urea + 2 H2O + H(+) = hydrogencarbonate + 2 NH4(+). The protein operates within nitrogen metabolism; urea degradation; CO(2) and NH(3) from urea (urease route): step 1/1. This is Urease subunit alpha from Thermosynechococcus vestitus (strain NIES-2133 / IAM M-273 / BP-1).